The following is a 115-amino-acid chain: Aspartate 1-decarboxylase (115 aa).

Serine 25 acts as the Schiff-base intermediate with substrate; via pyruvic acid in catalysis. Residue serine 25 is modified to Pyruvic acid (Ser). Residue threonine 57 coordinates substrate. Tyrosine 58 serves as the catalytic Proton donor. Position 71–73 (71–73 (GAA)) interacts with substrate.

The protein belongs to the PanD family. In terms of assembly, heterooctamer of four alpha and four beta subunits. Pyruvate is required as a cofactor. Is synthesized initially as an inactive proenzyme, which is activated by self-cleavage at a specific serine bond to produce a beta-subunit with a hydroxyl group at its C-terminus and an alpha-subunit with a pyruvoyl group at its N-terminus.

Its subcellular location is the cytoplasm. It carries out the reaction L-aspartate + H(+) = beta-alanine + CO2. Its pathway is cofactor biosynthesis; (R)-pantothenate biosynthesis; beta-alanine from L-aspartate: step 1/1. Catalyzes the pyruvoyl-dependent decarboxylation of aspartate to produce beta-alanine. In Campylobacter concisus (strain 13826), this protein is Aspartate 1-decarboxylase.